Here is a 260-residue protein sequence, read N- to C-terminus: Serine/threonine-protein acetyltransferase NGR_a02610 (260 aa).

Active-site residues include histidine 123 and glutamate 143. Histidine 123 lines the CoA pocket. A CoA-binding site is contributed by 180 to 181 (KS). Cysteine 185 is an active-site residue.

The protein belongs to the acetyltransferase YopJ family.

The enzyme catalyses L-threonyl-[protein] + acetyl-CoA = O-acetyl-L-threonyl-[protein] + CoA. It catalyses the reaction L-seryl-[protein] + acetyl-CoA = O-acetyl-L-seryl-[protein] + CoA. Functionally, serine/threonine-protein acetyltransferase translocated into infected cells, which mediates acetylation of serine and threonine residues of host target proteins. The sequence is that of Serine/threonine-protein acetyltransferase NGR_a02610 from Sinorhizobium fredii (strain NBRC 101917 / NGR234).